A 238-amino-acid polypeptide reads, in one-letter code: 1-(5-phosphoribosyl)-5-[(5-phosphoribosylamino)methylideneamino] imidazole-4-carboxamide isomerase (238 aa).

Residue aspartate 8 is the Proton acceptor of the active site. Aspartate 130 (proton donor) is an active-site residue.

This sequence belongs to the HisA/HisF family.

It localises to the cytoplasm. The catalysed reaction is 1-(5-phospho-beta-D-ribosyl)-5-[(5-phospho-beta-D-ribosylamino)methylideneamino]imidazole-4-carboxamide = 5-[(5-phospho-1-deoxy-D-ribulos-1-ylimino)methylamino]-1-(5-phospho-beta-D-ribosyl)imidazole-4-carboxamide. It participates in amino-acid biosynthesis; L-histidine biosynthesis; L-histidine from 5-phospho-alpha-D-ribose 1-diphosphate: step 4/9. This Methanococcus maripaludis (strain C7 / ATCC BAA-1331) protein is 1-(5-phosphoribosyl)-5-[(5-phosphoribosylamino)methylideneamino] imidazole-4-carboxamide isomerase.